Here is a 554-residue protein sequence, read N- to C-terminus: Arginine--tRNA ligase (554 aa).

The 'HIGH' region motif lies at 129–139 (ANPTGPLHIGH).

It belongs to the class-I aminoacyl-tRNA synthetase family. As to quaternary structure, monomer.

The protein resides in the cytoplasm. It catalyses the reaction tRNA(Arg) + L-arginine + ATP = L-arginyl-tRNA(Arg) + AMP + diphosphate. The polypeptide is Arginine--tRNA ligase (Citrifermentans bemidjiense (strain ATCC BAA-1014 / DSM 16622 / JCM 12645 / Bem) (Geobacter bemidjiensis)).